The primary structure comprises 233 residues: Preprocaerulein type-4 (233 aa).

The signal sequence occupies residues 1–26; the sequence is MFKGILLCVLFAVLSANPLSQPEGFA. Positions 27–72 are excised as a propeptide; the sequence is DEERDVRGLASLLGKALKATLKIGTHFLGGAPQQREANDERRFADG. Pyrrolidone carboxylic acid is present on Q73. A Sulfotyrosine modification is found at Y76. Position 82 is a phenylalanine amide (F82). A propeptide spanning residues 86 to 87 is cleaved from the precursor; sequence DG. Residue Q88 is modified to Pyrrolidone carboxylic acid. At Y91 the chain carries Sulfotyrosine. At F97 the chain carries Phenylalanine amide. Residues 101–151 constitute a propeptide that is removed on maturation; sequence DDEDDVHERDVRGFGSFLGKALKAALKIGANALGGAPQQREANDERRFADG. The residue at position 152 (Q152) is a Pyrrolidone carboxylic acid. Y155 is modified (sulfotyrosine). At F161 the chain carries Phenylalanine amide. Positions 165-215 are excised as a propeptide; sequence DDEDDVNERDVRGFGSFLGKALKAALKIGANALGGSPQQREANDERRFADG. A disordered region spans residues 197 to 233; it reads LGGSPQQREANDERRFADGQQDYTGWMDFGRRNGEDD. Q216 is subject to Pyrrolidone carboxylic acid. Residue Y219 is modified to Sulfotyrosine. At F225 the chain carries Phenylalanine amide. Positions 229-233 are excised as a propeptide; sequence NGEDD.

This sequence belongs to the gastrin/cholecystokinin family. Expressed by the skin glands.

The protein localises to the secreted. Functionally, the pharmacological activities of caerulein are quite similar to the physiological activities of gastrin and related peptides. This chain is Preprocaerulein type-4, found in Xenopus laevis (African clawed frog).